Here is a 195-residue protein sequence, read N- to C-terminus: ATP-dependent Clp protease proteolytic subunit (195 aa).

S99 serves as the catalytic Nucleophile. Residue H124 is part of the active site.

The protein belongs to the peptidase S14 family. In terms of assembly, fourteen ClpP subunits assemble into 2 heptameric rings which stack back to back to give a disk-like structure with a central cavity, resembling the structure of eukaryotic proteasomes.

Its subcellular location is the cytoplasm. It catalyses the reaction Hydrolysis of proteins to small peptides in the presence of ATP and magnesium. alpha-casein is the usual test substrate. In the absence of ATP, only oligopeptides shorter than five residues are hydrolyzed (such as succinyl-Leu-Tyr-|-NHMec, and Leu-Tyr-Leu-|-Tyr-Trp, in which cleavage of the -Tyr-|-Leu- and -Tyr-|-Trp bonds also occurs).. Cleaves peptides in various proteins in a process that requires ATP hydrolysis. Has a chymotrypsin-like activity. Plays a major role in the degradation of misfolded proteins. The polypeptide is ATP-dependent Clp protease proteolytic subunit (Carboxydothermus hydrogenoformans (strain ATCC BAA-161 / DSM 6008 / Z-2901)).